We begin with the raw amino-acid sequence, 528 residues long: 3-ketoacyl-CoA synthase 2 (528 aa).

2 helical membrane passes run 36–56 (LGYHYLISNAVYILILPVGLL) and 78–98 (FHFLSSTLFAALLIFLTTLYF). The region spanning 97–388 (YFTTRPRRIF…FFATLVARKV (292 aa)) is the FAE domain. Catalysis depends on residues cysteine 241, histidine 320, histidine 407, histidine 411, and asparagine 444.

The protein belongs to the thiolase-like superfamily. Chalcone/stilbene synthases family. Expressed in siliques, flowers and stems. In young seedlings, expressed in the central cylinder of primary roots, in emerging lateral roots and in their root cap, but not in aboveground tissues such as hypocotyls, cotyledons and leaves. Expressed in sepals in mature flowers and in the chalaza and micropyle region of developing seeds shortly prior to or just after the detachment from the funiculus. Expressed in roots, flowers, cauline leaves and siliques.

The protein resides in the membrane. It carries out the reaction a very-long-chain acyl-CoA + malonyl-CoA + H(+) = a very-long-chain 3-oxoacyl-CoA + CO2 + CoA. It functions in the pathway lipid metabolism; fatty acid biosynthesis. Its activity is regulated as follows. Inhibited by K3 herbicides such as allidochlor, anilofos, cafenstrole and flufenacet. Strongly inhibited by metazachlor. In terms of biological role, mediates the synthesis of VLCFAs from 22 to 26 carbons in length (e.g. C22, C24, C26). Involved in the elongation of C20 fatty acid suberin precursors. Functionally redundant with KCS20 in the two-carbon elongation of C22 fatty acids that is required for cuticular wax and root suberin biosynthesis. The polypeptide is 3-ketoacyl-CoA synthase 2 (Arabidopsis thaliana (Mouse-ear cress)).